A 930-amino-acid polypeptide reads, in one-letter code: Translation initiation factor IF-2 (930 aa).

Residues 50-67 (FKPAAAPKVEAKPAAPKV) show a composition bias toward low complexity. Disordered regions lie at residues 50 to 217 (FKPA…SSEE) and 260 to 346 (EVVP…HELP). 2 stretches are compositionally biased toward basic and acidic residues: residues 68–90 (SAEKKAEKSEPAKPAVAKEEAKP) and 110–125 (FKAEREARAKEQAERR). The span at 129-141 (KGNNRDQQQNGNR) shows a compositional bias: low complexity. Basic and acidic residues-rich tracts occupy residues 157-167 (RDNRRFNDQAK) and 262-295 (VPEKKEPAVDTRRKKQARPDKNRDDYDHEEDGPR). Residues 309-318 (NQKNSNWNNN) are compositionally biased toward low complexity. A compositionally biased stretch (basic and acidic residues) spans 337–346 (VTERKFHELP). The tr-type G domain maps to 432–599 (ERPPVVTIMG…TVLLVAEIQE (168 aa)). Residues 441-448 (GHVDHGKT) are G1. Position 441-448 (441-448 (GHVDHGKT)) interacts with GTP. Residues 466–470 (GITQH) are G2. A G3 region spans residues 487-490 (DTPG). GTP-binding positions include 487-491 (DTPGH) and 541-544 (NKID). Residues 541–544 (NKID) form a G4 region. Residues 577–579 (SAK) are G5.

It belongs to the TRAFAC class translation factor GTPase superfamily. Classic translation factor GTPase family. IF-2 subfamily.

Its subcellular location is the cytoplasm. Its function is as follows. One of the essential components for the initiation of protein synthesis. Protects formylmethionyl-tRNA from spontaneous hydrolysis and promotes its binding to the 30S ribosomal subunits. Also involved in the hydrolysis of GTP during the formation of the 70S ribosomal complex. The protein is Translation initiation factor IF-2 of Streptococcus pneumoniae (strain Taiwan19F-14).